A 564-amino-acid polypeptide reads, in one-letter code: Dihydroxy-acid dehydratase (564 aa).

A [2Fe-2S] cluster-binding site is contributed by cysteine 50. Aspartate 82 lines the Mg(2+) pocket. A [2Fe-2S] cluster-binding site is contributed by cysteine 123. The Mg(2+) site is built by aspartate 124 and lysine 125. N6-carboxylysine is present on lysine 125. Cysteine 195 is a [2Fe-2S] cluster binding site. Position 447 (glutamate 447) interacts with Mg(2+). The Proton acceptor role is filled by serine 473.

Belongs to the IlvD/Edd family. Homodimer. Requires [2Fe-2S] cluster as cofactor. The cofactor is Mg(2+).

The enzyme catalyses (2R)-2,3-dihydroxy-3-methylbutanoate = 3-methyl-2-oxobutanoate + H2O. The catalysed reaction is (2R,3R)-2,3-dihydroxy-3-methylpentanoate = (S)-3-methyl-2-oxopentanoate + H2O. It participates in amino-acid biosynthesis; L-isoleucine biosynthesis; L-isoleucine from 2-oxobutanoate: step 3/4. Its pathway is amino-acid biosynthesis; L-valine biosynthesis; L-valine from pyruvate: step 3/4. Its function is as follows. Functions in the biosynthesis of branched-chain amino acids. Catalyzes the dehydration of (2R,3R)-2,3-dihydroxy-3-methylpentanoate (2,3-dihydroxy-3-methylvalerate) into 2-oxo-3-methylpentanoate (2-oxo-3-methylvalerate) and of (2R)-2,3-dihydroxy-3-methylbutanoate (2,3-dihydroxyisovalerate) into 2-oxo-3-methylbutanoate (2-oxoisovalerate), the penultimate precursor to L-isoleucine and L-valine, respectively. The sequence is that of Dihydroxy-acid dehydratase from Chloroflexus aggregans (strain MD-66 / DSM 9485).